The sequence spans 352 residues: Protein Wnt-3a (352 aa).

A signal peptide spans 1-18; it reads MAPLGYFLLLCSLKQALG. Disulfide bonds link C77–C88, C128–C136, C138–C155, C203–C217, C205–C212, C281–C312, C297–C307, C311–C351, C327–C342, C329–C339, and C334–C335. Residue N87 is glycosylated (N-linked (GlcNAc...) asparagine). Residue S209 is the site of O-palmitoleoyl serine; by PORCN attachment. N-linked (GlcNAc...) asparagine glycosylation occurs at N298.

Belongs to the Wnt family. As to quaternary structure, forms a soluble 1:1 complex with AFM; this prevents oligomerization and is required for prolonged biological activity. The complex with AFM may represent the physiological form in body fluids. Homooligomer; disulfide-linked, leading to inactivation. Interacts with PORCN. Interacts with APCDD1 and WLS. Component of the Wnt-Fzd-LRP5-LRP6 signaling complex that contains a WNT protein, a FZD protein and LRP5 or LRP6. Interacts directly in the complex with LRP6. Interacts with glypican GPC3. Interacts with PKD1 (via extracellular domain). Interacts with FZD5. Post-translationally, palmitoleoylation by PORCN is required for efficient binding to frizzled receptors. Palmitoleoylation is required for proper trafficking to cell surface, vacuolar acidification is critical to release palmitoleoylated WNT3A from WLS in secretory vesicles. Depalmitoleoylated by NOTUM, leading to inhibit Wnt signaling pathway, possibly by promoting disulfide bond formation and oligomerization. Proteolytic processing by TIKI1 and TIKI2 promotes oxidation and formation of large disulfide-bond oligomers, leading to inactivation of WNT3A. In terms of processing, disulfide bonds have critical and distinct roles in secretion and activity. Loss of each conserved cysteine in WNT3A results in high molecular weight oxidized Wnt oligomers, which are formed through inter-Wnt disulfide bonding. In terms of tissue distribution, moderately expressed in placenta and at low levels in adult lung, spleen, and prostate.

It localises to the secreted. The protein resides in the extracellular space. Its subcellular location is the extracellular matrix. Its function is as follows. Ligand for members of the frizzled family of seven transmembrane receptors. Functions in the canonical Wnt signaling pathway that results in activation of transcription factors of the TCF/LEF family. Required for normal embryonic mesoderm development and formation of caudal somites. Required for normal morphogenesis of the developing neural tube. Mediates self-renewal of the stem cells at the bottom on intestinal crypts (in vitro). This is Protein Wnt-3a (WNT3A) from Homo sapiens (Human).